The chain runs to 224 residues: MINLTVKIAIDGPAGAGKSTVAKKLAKLLGFTYIDTGAMYRAITLKVLRENISLEDEERIVEVARKSDISLDGERVFLDGEDVSEEIRKPIISQKVSVVSQIPEVREILVKKQRKIAEGKNVVMDGRDIGTVVLPDAQFKFFLTASLEERARRRYEELKNKGTEVKYEEVLEEIKKRDSLDSGRKTSPLTIPEGAILIDTTDLTEEEVVERVYEAIRKNTKGEI.

12–20 lines the ATP pocket; it reads GPAGAGKST.

The protein belongs to the cytidylate kinase family. Type 1 subfamily.

The protein localises to the cytoplasm. It carries out the reaction CMP + ATP = CDP + ADP. The enzyme catalyses dCMP + ATP = dCDP + ADP. This Caldanaerobacter subterraneus subsp. tengcongensis (strain DSM 15242 / JCM 11007 / NBRC 100824 / MB4) (Thermoanaerobacter tengcongensis) protein is Cytidylate kinase.